The chain runs to 438 residues: Shikimate transporter (438 aa).

12 helical membrane-spanning segments follow: residues 28–48 (FAGAVVDWYDFLLYGITAALV), 64–84 (LAAFATFGVGFLFRPLGGVIF), 109–129 (ALIGILPSFSTIGWWAPILLV), 133–153 (AIQGFAVGGEWGGAALLSVES), 168–188 (VGYGVGLLLSTGLVSLISMMT), 193–213 (FLSWGWRIPFLFSIVLVLGAL), 255–275 (IIALRLCELLTMYIVTAFALN), 287–307 (LFLNIGLLVGGLSCLTIPCFA), 318–337 (VYITGTLIGTLSAFPFFMAL), 341–363 (SIFWIVFFSIMLANIAHDMVVCV), 387–407 (VASVVGGGFTPFIAAALITYF), and 411–431 (WHSVAIYLLAGCLISAMTALL).

Belongs to the major facilitator superfamily. Metabolite:H+ Symporter (MHS) family (TC 2.A.1.6) family.

It localises to the cell inner membrane. It carries out the reaction shikimate(in) + H(+)(in) = shikimate(out) + H(+)(out). Functionally, involved in the uptake of shikimate, an intermediate in the aromatic amino acid biosynthetic pathway. The sequence is that of Shikimate transporter from Escherichia coli (strain K12).